The following is a 310-amino-acid chain: GTP-binding protein GTR1 (310 aa).

GTP-binding residues include Ser15, Gly18, Lys19, Ser20, Ser21, Thr35, Thr41, Gly64, His126, Asp129, and Ile166.

The protein belongs to the GTR/RAG GTP-binding protein family. As to quaternary structure, heterodimer; with GTR2. Component of the GSE complex composed of GTR1, GTR2, SLM4, MEH1 and LTV1. Interacts with GTR2; the interaction is direct. Interacts with TOR1.

The protein localises to the vacuole membrane. The catalysed reaction is GTP + H2O = GDP + phosphate + H(+). Functionally, GTPase involved in activation of the TORC1 signaling pathway, which promotes growth and represses autophagy in nutrient-rich conditions. Also required for TORC1 inactivation during nitrogen starvation. Required for intracellular sorting of GAP1 out of the endosome. Functionally associated with the inorganic phosphate transporter PHO84, and may be involved in regulating its function or localization. In Saccharomyces cerevisiae (strain ATCC 204508 / S288c) (Baker's yeast), this protein is GTP-binding protein GTR1 (GTR1).